The sequence spans 346 residues: Tetraacyldisaccharide 4'-kinase (346 aa).

Position 54-61 (54-61 (TVGGAGKT)) interacts with ATP.

The protein belongs to the LpxK family.

It catalyses the reaction a lipid A disaccharide + ATP = a lipid IVA + ADP + H(+). It functions in the pathway glycolipid biosynthesis; lipid IV(A) biosynthesis; lipid IV(A) from (3R)-3-hydroxytetradecanoyl-[acyl-carrier-protein] and UDP-N-acetyl-alpha-D-glucosamine: step 6/6. Transfers the gamma-phosphate of ATP to the 4'-position of a tetraacyldisaccharide 1-phosphate intermediate (termed DS-1-P) to form tetraacyldisaccharide 1,4'-bis-phosphate (lipid IVA). The protein is Tetraacyldisaccharide 4'-kinase of Rhizobium etli (strain ATCC 51251 / DSM 11541 / JCM 21823 / NBRC 15573 / CFN 42).